Reading from the N-terminus, the 111-residue chain is Large ribosomal subunit protein uL22 (111 aa).

Belongs to the universal ribosomal protein uL22 family. Part of the 50S ribosomal subunit.

In terms of biological role, this protein binds specifically to 23S rRNA; its binding is stimulated by other ribosomal proteins, e.g. L4, L17, and L20. It is important during the early stages of 50S assembly. It makes multiple contacts with different domains of the 23S rRNA in the assembled 50S subunit and ribosome. The globular domain of the protein is located near the polypeptide exit tunnel on the outside of the subunit, while an extended beta-hairpin is found that lines the wall of the exit tunnel in the center of the 70S ribosome. In Francisella philomiragia subsp. philomiragia (strain ATCC 25017 / CCUG 19701 / FSC 153 / O#319-036), this protein is Large ribosomal subunit protein uL22.